Consider the following 270-residue polypeptide: 4-hydroxy-tetrahydrodipicolinate reductase (270 aa).

7–12 is an NAD(+) binding site; that stretch reads GANGKM. Position 34 (Arg-34) interacts with NADP(+). NAD(+) is bound by residues 97–99 and 121–124; these read GTT and SGNM. Residue His-155 is the Proton donor/acceptor of the active site. His-156 is a (S)-2,3,4,5-tetrahydrodipicolinate binding site. Lys-159 acts as the Proton donor in catalysis. 165–166 serves as a coordination point for (S)-2,3,4,5-tetrahydrodipicolinate; sequence GT.

The protein belongs to the DapB family.

Its subcellular location is the cytoplasm. It carries out the reaction (S)-2,3,4,5-tetrahydrodipicolinate + NAD(+) + H2O = (2S,4S)-4-hydroxy-2,3,4,5-tetrahydrodipicolinate + NADH + H(+). The enzyme catalyses (S)-2,3,4,5-tetrahydrodipicolinate + NADP(+) + H2O = (2S,4S)-4-hydroxy-2,3,4,5-tetrahydrodipicolinate + NADPH + H(+). It functions in the pathway amino-acid biosynthesis; L-lysine biosynthesis via DAP pathway; (S)-tetrahydrodipicolinate from L-aspartate: step 4/4. Functionally, catalyzes the conversion of 4-hydroxy-tetrahydrodipicolinate (HTPA) to tetrahydrodipicolinate. This Bartonella quintana (strain Toulouse) (Rochalimaea quintana) protein is 4-hydroxy-tetrahydrodipicolinate reductase.